The primary structure comprises 1939 residues: Myosin-4 (1939 aa).

In terms of domain architecture, Myosin N-terminal SH3-like spans 33–82 (DAKSSVFVVDAKESYVKATVQSREGGKVTAKTEGGATVTVKDDQVFSMNP). Serine 36 carries the phosphoserine modification. 2 positions are modified to phosphothreonine: threonine 64 and threonine 69. Serine 79 is modified (phosphoserine). One can recognise a Myosin motor domain in the interval 86-782 (DKIEDMAMMT…LLGTLEEMRD (697 aa)). Residue lysine 130 is modified to N6,N6,N6-trimethyllysine. 179 to 186 (GESGAGKT) contacts ATP. Tyrosine 389 bears the Phosphotyrosine mark. Position 391 is a phosphothreonine (threonine 391). Serine 392 carries the phosphoserine modification. Threonine 419 is modified (phosphothreonine). Residue tyrosine 424 is modified to Phosphotyrosine. Serine 625 carries the phosphoserine modification. The actin-binding stretch occupies residues 659–681 (LNKLMTNLKSTHPHFVRCLIPNE). Histidine 757 carries the post-translational modification Pros-methylhistidine. Residues 761-775 (KFGHTKVFFKAGLLG) form an actin-binding region. Position 776 is a phosphothreonine (threonine 776). The 30-residue stretch at 785 to 814 (LAQLITRTQAVCRGYLMRVEFKKMMERRES) folds into the IQ domain. Positions 843–1939 (LLKSAETEKE…EVHTKVISEE (1097 aa)) form a coiled coil. A phosphoserine mark is found at serine 1092 and serine 1096. Disordered regions lie at residues 1128-1147 (AERA…SREL) and 1153-1172 (RLEE…KKRE). Phosphoserine is present on residues serine 1162 and serine 1237. Residue threonine 1241 is modified to Phosphothreonine. Phosphoserine is present on serine 1243. Threonine 1255 is subject to Phosphothreonine. Position 1261 is a phosphoserine (serine 1261). At threonine 1265 the chain carries Phosphothreonine. The tract at residues 1276–1299 (ELSTQKARLHTESGEFSRQLDEKD) is disordered. Position 1278 is a phosphoserine (serine 1278). Positions 1284–1299 (LHTESGEFSRQLDEKD) are enriched in basic and acidic residues. Phosphothreonine is present on threonine 1286. A phosphoserine mark is found at serine 1288, serine 1292, serine 1303, serine 1306, and serine 1413. Position 1464 is a phosphotyrosine (tyrosine 1464). Threonine 1467 bears the Phosphothreonine mark. At serine 1474 the chain carries Phosphoserine. At tyrosine 1492 the chain carries Phosphotyrosine. Serine 1495 is modified (phosphoserine). A Phosphothreonine modification is found at threonine 1501. Residue serine 1514 is modified to Phosphoserine. Threonine 1517 is subject to Phosphothreonine. Phosphoserine is present on residues serine 1542, serine 1547, serine 1554, serine 1574, serine 1600, serine 1603, serine 1714, and serine 1726. Threonine 1730 and threonine 1736 each carry phosphothreonine. Phosphoserine is present on serine 1739.

Belongs to the TRAFAC class myosin-kinesin ATPase superfamily. Myosin family. As to quaternary structure, muscle myosin is a hexameric protein that consists of 2 heavy chain subunits (MHC), 2 alkali light chain subunits (MLC) and 2 regulatory light chain subunits (MLC-2). Expressed in type 2b myofibers in the tibialis anterior muscle (at protein level).

Its subcellular location is the cytoplasm. The protein resides in the myofibril. Its function is as follows. Muscle contraction. This is Myosin-4 (Myh4) from Mus musculus (Mouse).